The chain runs to 324 residues: Inhibitor of growth protein 1 homolog (324 aa).

The segment at 120–237 is disordered; sequence AEEEKKKKKS…SSRKQKSMAA (118 aa). The segment covering 140-169 has biased composition (low complexity); that stretch reads SSTTSSSSSSSSSSLSLSSSTNNTSSLNSS. Gly residues predominate over residues 170–186; it reads SGGGGGGSGGGGGGGGH. Residues 201 to 229 show a composition bias toward low complexity; it reads SLTSSSSSGNINGMSSSSSSSSSSSSLSS. The PHD-type zinc finger occupies 271–320; the sequence is PTYCFCNRVSFGEMVGCENPDCKIEWFHFECVGLTSTPKGKWYCPDCTRI. Zn(2+)-binding residues include cysteine 274, cysteine 276, cysteine 287, cysteine 292, histidine 298, cysteine 301, cysteine 314, and cysteine 317.

It belongs to the ING family. In terms of assembly, interacts with H3K4me3 and to a lesser extent with H3K4me2.

The protein resides in the nucleus. Its function is as follows. Involved in regulation of the growth and differentiation transition (GDT) process, probably by regulating gene expression via histone modification. The sequence is that of Inhibitor of growth protein 1 homolog from Dictyostelium discoideum (Social amoeba).